The chain runs to 224 residues: ATP phosphoribosyltransferase (224 aa).

Belongs to the ATP phosphoribosyltransferase family. Short subfamily. In terms of assembly, heteromultimer composed of HisG and HisZ subunits.

Its subcellular location is the cytoplasm. It carries out the reaction 1-(5-phospho-beta-D-ribosyl)-ATP + diphosphate = 5-phospho-alpha-D-ribose 1-diphosphate + ATP. It participates in amino-acid biosynthesis; L-histidine biosynthesis; L-histidine from 5-phospho-alpha-D-ribose 1-diphosphate: step 1/9. Functionally, catalyzes the condensation of ATP and 5-phosphoribose 1-diphosphate to form N'-(5'-phosphoribosyl)-ATP (PR-ATP). Has a crucial role in the pathway because the rate of histidine biosynthesis seems to be controlled primarily by regulation of HisG enzymatic activity. The chain is ATP phosphoribosyltransferase from Cupriavidus pinatubonensis (strain JMP 134 / LMG 1197) (Cupriavidus necator (strain JMP 134)).